We begin with the raw amino-acid sequence, 203 residues long: Octanoyltransferase (203 aa).

The BPL/LPL catalytic domain maps to 32-203 (ISTPDEIWLV…LMHKIREIFS (172 aa)). Substrate is bound by residues 71-78 (RGGKITYH), 138-140 (SLG), and 151-153 (GMA). Cys-169 functions as the Acyl-thioester intermediate in the catalytic mechanism.

This sequence belongs to the LipB family.

The protein localises to the cytoplasm. It carries out the reaction octanoyl-[ACP] + L-lysyl-[protein] = N(6)-octanoyl-L-lysyl-[protein] + holo-[ACP] + H(+). Its pathway is protein modification; protein lipoylation via endogenous pathway; protein N(6)-(lipoyl)lysine from octanoyl-[acyl-carrier-protein]: step 1/2. Its function is as follows. Catalyzes the transfer of endogenously produced octanoic acid from octanoyl-acyl-carrier-protein onto the lipoyl domains of lipoate-dependent enzymes. Lipoyl-ACP can also act as a substrate although octanoyl-ACP is likely to be the physiological substrate. This is Octanoyltransferase from Buchnera aphidicola subsp. Baizongia pistaciae (strain Bp).